We begin with the raw amino-acid sequence, 276 residues long: Undecaprenyl-diphosphatase (276 aa).

7 helical membrane passes run 48 to 68, 92 to 112, 119 to 139, 155 to 175, 196 to 216, 225 to 245, and 255 to 275; these read AANS…AIVF, LSIA…FLFE, LFSV…MLFA, ISYK…WPGF, ADFT…LSLV, DLMP…LFVV, and IKLV…LLIM.

The protein belongs to the UppP family.

It localises to the cell membrane. It carries out the reaction di-trans,octa-cis-undecaprenyl diphosphate + H2O = di-trans,octa-cis-undecaprenyl phosphate + phosphate + H(+). Catalyzes the dephosphorylation of undecaprenyl diphosphate (UPP). Confers resistance to bacitracin. In Bacillus subtilis (strain 168), this protein is Undecaprenyl-diphosphatase.